The primary structure comprises 337 residues: MDTAGPSAPESTRGASWSEAQAARDIVPLPTGVFQVAERLQKRICALCPKDLECSVLYFAQSENIAAHENCLLYSSALVECEDYDPSNNDRNFDVESVKKEIKRGRKLKCTFCGKKGATVGCDLKSCFKNYHFFCAKNDHAVLQADGRTGIYKVFCQQHADPQNDLPSVKPLSGVFHSHYSEQTKPRHACFSGVKRKRGRSKRHHVQPPERMALKKEKDGRHTDAIVKAAFLKKCKEAGLLDALFEEILDKLHLIQERLMDETTAESDYEEIGTSLFDCRLFEDTLVNFQAAIENQIHQSEERRRQLKEEIELLQDLKQTLCSGLQSSSTSDSSLSS.

Residues 42–78 form a C2HC pre-PHD-type zinc finger; it reads KRICALCPKDLECSVLYFAQSENIAAHENCLLYSSAL. A PHD-type zinc finger spans residues 108–160; it reads LKCTFCGKKGATVGCDLKSCFKNYHFFCAKNDHAVLQADGRTGIYKVFCQQHA.

In terms of assembly, interacts with BRCA1 and RELA.

The protein localises to the nucleus. In terms of biological role, positive regulator of Th1-type cytokine gene expression. The polypeptide is PHD finger protein 11 (PHF11) (Bos taurus (Bovine)).